Here is a 533-residue protein sequence, read N- to C-terminus: Bifunctional purine biosynthesis protein PurH (533 aa).

The MGS-like domain occupies 1 to 148; it reads MQPNRPIRQA…KNHQDVAIVV (148 aa).

Belongs to the PurH family.

The enzyme catalyses (6R)-10-formyltetrahydrofolate + 5-amino-1-(5-phospho-beta-D-ribosyl)imidazole-4-carboxamide = 5-formamido-1-(5-phospho-D-ribosyl)imidazole-4-carboxamide + (6S)-5,6,7,8-tetrahydrofolate. It catalyses the reaction IMP + H2O = 5-formamido-1-(5-phospho-D-ribosyl)imidazole-4-carboxamide. Its pathway is purine metabolism; IMP biosynthesis via de novo pathway; 5-formamido-1-(5-phospho-D-ribosyl)imidazole-4-carboxamide from 5-amino-1-(5-phospho-D-ribosyl)imidazole-4-carboxamide (10-formyl THF route): step 1/1. It participates in purine metabolism; IMP biosynthesis via de novo pathway; IMP from 5-formamido-1-(5-phospho-D-ribosyl)imidazole-4-carboxamide: step 1/1. This Pasteurella multocida (strain Pm70) protein is Bifunctional purine biosynthesis protein PurH.